Here is a 123-residue protein sequence, read N- to C-terminus: UPF0231 protein PMI2039 (123 aa).

This sequence belongs to the UPF0231 family.

The chain is UPF0231 protein PMI2039 from Proteus mirabilis (strain HI4320).